Reading from the N-terminus, the 431-residue chain is Glycerol-3-phosphate dehydrogenase [NAD(P)+] (431 aa).

Residues 1–19 show a composition bias toward polar residues; the sequence is MTSANDKSTDTNVDSTQAE. Residues 1-25 form a disordered region; sequence MTSANDKSTDTNVDSTQAEQKMAEK. The NADPH site is built by Ser79, Phe80, Arg100, and Lys173. Residues Lys173 and Gly201 each coordinate sn-glycerol 3-phosphate. Ala205 contributes to the NADPH binding site. Positions 256, 309, 319, 320, and 321 each coordinate sn-glycerol 3-phosphate. The Proton acceptor role is filled by Lys256. Arg320 contributes to the NADPH binding site. Residue Glu346 coordinates NADPH.

This sequence belongs to the NAD-dependent glycerol-3-phosphate dehydrogenase family.

It is found in the cytoplasm. It catalyses the reaction sn-glycerol 3-phosphate + NAD(+) = dihydroxyacetone phosphate + NADH + H(+). The catalysed reaction is sn-glycerol 3-phosphate + NADP(+) = dihydroxyacetone phosphate + NADPH + H(+). It participates in membrane lipid metabolism; glycerophospholipid metabolism. Functionally, catalyzes the reduction of the glycolytic intermediate dihydroxyacetone phosphate (DHAP) to sn-glycerol 3-phosphate (G3P), the key precursor for phospholipid synthesis. This is Glycerol-3-phosphate dehydrogenase [NAD(P)+] from Psychrobacter arcticus (strain DSM 17307 / VKM B-2377 / 273-4).